We begin with the raw amino-acid sequence, 171 residues long: uncharacterized protein (171 aa).

The protein belongs to the IUNH family.

This is an uncharacterized protein from Acidianus ambivalens (Desulfurolobus ambivalens).